Consider the following 339-residue polypeptide: Photosystem II assembly lipoprotein Ycf48 (339 aa).

Residues 1 to 22 (MVIVKSWQKIFALLVVLLLCIG) form the signal peptide. Residue Cys-23 is the site of N-palmitoyl cysteine attachment. A lipid anchor (S-diacylglycerol cysteine) is attached at Cys-23.

This sequence belongs to the Ycf48 family. As to quaternary structure, part of early PSII assembly complexes which includes D1 (psbA) and PsbI; not found in mature PSII. Binds to the lumenal side of PSII complexes. Interacts with YidC.

It is found in the cellular thylakoid membrane. In terms of biological role, a factor required for optimal assembly of photosystem II (PSII), acting in the early stages of PSII assembly. Also plays a role in replacement of photodamaged D1 (psbA). Assists YidC in synthesis of chlorophyll-binding proteins. In Trichormus variabilis (strain ATCC 29413 / PCC 7937) (Anabaena variabilis), this protein is Photosystem II assembly lipoprotein Ycf48.